A 138-amino-acid polypeptide reads, in one-letter code: Venom allergen 2 (138 aa).

Positions 1-19 are cleaved as a signal peptide; the sequence is MKSFVLATCLLGFAQIIYA. 3 disulfide bridges follow: Cys-34–Cys-57, Cys-81–Cys-94, and Cys-101–Cys-122.

Belongs to the ant venom allergen 2/4 family. Homodimer; disulfide-linked. Expressed by the venom gland.

The protein resides in the secreted. The protein is Venom allergen 2 of Solenopsis invicta (Red imported fire ant).